The following is a 563-amino-acid chain: BOS complex subunit NCLN (563 aa).

Positions Met-1–Ala-42 are cleaved as a signal peptide. The Lumenal portion of the chain corresponds to Ala-43–Ala-522. Residues Asn-241 and Asn-428 are each glycosylated (N-linked (GlcNAc...) asparagine). A helical membrane pass occupies residues Ile-523 to Val-543. The Cytoplasmic portion of the chain corresponds to Gln-544–Gln-563.

The protein belongs to the nicastrin family. As to quaternary structure, component of the back of Sec61 (BOS) complex, composed of NCLN/Nicalin, NOMO1 and TMEM147. The BOS complex is part of the multi-pass translocon (MPT) complex, composed of three subcomplexes, the GEL complex (composed of RAB5IF/OPTI and TMCO1), the BOS complex (composed of NCLN/Nicalin, NOMO1 and TMEM147) and the PAT complex (composed of WDR83OS/Asterix and CCDC47). The MPT complex associates with the SEC61 complex.

Its subcellular location is the endoplasmic reticulum membrane. Functionally, component of the multi-pass translocon (MPT) complex that mediates insertion of multi-pass membrane proteins into the lipid bilayer of membranes. The MPT complex takes over after the SEC61 complex: following membrane insertion of the first few transmembrane segments of proteins by the SEC61 complex, the MPT complex occludes the lateral gate of the SEC61 complex to promote insertion of subsequent transmembrane regions. May antagonize Nodal signaling and subsequent organization of axial structures during mesodermal patterning, via its interaction with NOMO. This Mus musculus (Mouse) protein is BOS complex subunit NCLN (Ncln).